We begin with the raw amino-acid sequence, 310 residues long: MVDKDTERDIEMKRQLRRLRELHLYSTWKKYQEAMKTSLGVPQCERDEGSLGKPLCPPEILSETLPGSVKKRVCFPSEDHLEEFIAEHLPEASNQSLLTVAHADAGTQTNGDLEDLEEHGPGQTVSEEATEVHTMEGDPDTLAEFLIRDVLQELSSYNGEEEDPEEVKTSLGVPQRGDLEDLEEHVPGQTVSEEATGVHMMQVDPATLAKSDLEDLEEHVPEQTVSEEATGVHMMQVDPATLAKQLEDSTITGSHQQMSASPSSAPAEEATEKTKVEEEVKTRKPKKKTRKPSKKSRWNVLKCWDIFNIF.

Disordered stretches follow at residues 39–58, 108–136, 156–184, and 250–297; these read LGVPQCERDEGSLGKPLCPP, QTNGDLEDLEEHGPGQTVSEEATEVHTME, SYNGEEEDPEEVKTSLGVPQRGDLEDLEE, and TITG…KKSR. Residues 259–268 show a composition bias toward low complexity; the sequence is SASPSSAPAE. Residues 270 to 282 are compositionally biased toward basic and acidic residues; it reads ATEKTKVEEEVKT. Residues 283–297 show a composition bias toward basic residues; it reads RKPKKKTRKPSKKSR.

This sequence belongs to the FAM153 family.

This is Protein FAM153A (FAM153A) from Homo sapiens (Human).